Reading from the N-terminus, the 363-residue chain is MRWRFSTLEIILLLLVVAGSGMAYAWVVYGGGGLIGATYALFMCMPILAFERHIIFRRLYRRIHGSPTPAFLLSSLAVYFIFVNVGYAAAGLLLHVAGVMRESRTDAMLPSLNVLVYALATSGPIIFVLRVRELLGRDVFLSLLTGRYRKPVQEERVFLFIDLAGSTSLAERFGDLRMQEYLGKLFAAMADPVLRYGGSIDDYVGDAAVITWPYDRAVADAACIRCVFDILEQIEADAHRWQKDYGEVPRLRAALHGGTIVAAEIGVDKHKITYFGDTVNTTARLEGLCRTLNRQVLISADLLRRLRPPVFVRAEDLGEHEVKGRGQKLAVLSLTAGSLSGDGATEPAGETVRSPAAEAFTSL.

One can recognise a Guanylate cyclase domain in the interval 157–286 (VFLFIDLAGS…DTVNTTARLE (130 aa)). Mg(2+) is bound by residues aspartate 162 and aspartate 206. The interval 341–363 (GDGATEPAGETVRSPAAEAFTSL) is disordered.

It belongs to the adenylyl cyclase class-3 family. It depends on Mg(2+) as a cofactor.

It carries out the reaction ATP = 3',5'-cyclic AMP + diphosphate. Plays essential roles in regulation of cellular metabolism by catalyzing the synthesis of a second messenger, cAMP. This Rhizobium meliloti (strain 1021) (Ensifer meliloti) protein is Adenylate cyclase 2 (cya2).